The sequence spans 395 residues: S-adenosylmethionine synthase (395 aa).

Glu-10 provides a ligand contact to Mg(2+). His-16 contributes to the ATP binding site. Glu-44 provides a ligand contact to K(+). L-methionine contacts are provided by Glu-57 and Gln-100. ATP-binding positions include 168 to 170, 236 to 239, 253 to 254, Ala-270, Lys-274, and Lys-278; these read DGK, SGRF, and RK. Lys-278 provides a ligand contact to L-methionine.

This sequence belongs to the AdoMet synthase family. In terms of assembly, homotetramer. The cofactor is Mn(2+). Requires Mg(2+) as cofactor. Co(2+) is required as a cofactor. K(+) serves as cofactor.

The protein localises to the cytoplasm. The catalysed reaction is L-methionine + ATP + H2O = S-adenosyl-L-methionine + phosphate + diphosphate. It functions in the pathway amino-acid biosynthesis; S-adenosyl-L-methionine biosynthesis; S-adenosyl-L-methionine from L-methionine: step 1/1. In terms of biological role, catalyzes the formation of S-adenosylmethionine from methionine and ATP. The reaction comprises two steps that are both catalyzed by the same enzyme: formation of S-adenosylmethionine (AdoMet) and triphosphate, and subsequent hydrolysis of the triphosphate. This Populus deltoides (Eastern poplar) protein is S-adenosylmethionine synthase (METK).